The sequence spans 404 residues: Cytoplasmic 60S subunit biogenesis factor REI1 homolog 1 (404 aa).

2 C2H2-type zinc fingers span residues 4-28 and 68-92; these read LTCNACNMEFKDEEERNLHYKSDWH and YTCAICAKGYRSSKAHEQHLQSRSH. The tract at residues 119–169 is disordered; that stretch reads QHRGSIDDDSEDEWVEVDSDEELAAEEASDSLSKLNVNESGSAEDMDDDGD. Acidic residues-rich tracts occupy residues 125–147 and 160–169; these read DDDSEDEWVEVDSDEELAAEEAS and SAEDMDDDGD. 2 C2H2-type zinc fingers span residues 178-201 and 229-256; these read TCCLMCDKKHKTLESCMLHMHKHH and FMCLYCNELCRPFSSLEAVRKHMEAKSH.

The protein belongs to the REI1 family. In terms of assembly, can form homodimer. Interacts with RLP24, RPL24A, RPL24B, EBP1 and JJJ1.

Its subcellular location is the cytoplasm. In terms of biological role, pre-60S-associated factor involved in the cytoplasmic maturation of the 60S subunit. Involved in the dissociation and recycling of other late pre-60S factors before newly synthesized large ribosomal subunits enter translation. Can complement the growth defect of a yeast mutant lacking REI1. Required for leaf growth under cold temperature conditions. The polypeptide is Cytoplasmic 60S subunit biogenesis factor REI1 homolog 1 (Arabidopsis thaliana (Mouse-ear cress)).